The primary structure comprises 629 residues: Histone-lysine N-methyltransferase set9 (629 aa).

The SET domain occupies 120 to 234; the sequence is CPFEVTTTNR…IGEEITVSYG (115 aa). Composition is skewed to polar residues over residues 264–274, 338–350, 359–376, and 390–400; these read SEASSTASTPA, EQNT…TTTD, NGVT…NQRA, and ESQNSSASTAP. Disordered regions lie at residues 264–400 and 586–629; these read SEAS…STAP and VSFG…RMTM. The span at 597–614 shows a compositional bias: basic and acidic residues; it reads SEPRTETEDSEACDERRN.

The protein belongs to the class V-like SAM-binding methyltransferase superfamily. Histone-lysine methyltransferase family. Suvar4-20 subfamily.

The protein resides in the nucleus. It localises to the chromosome. The enzyme catalyses L-lysyl(20)-[histone H4] + 3 S-adenosyl-L-methionine = N(6),N(6),N(6)-trimethyl-L-lysyl(20)-[histone H4] + 3 S-adenosyl-L-homocysteine + 3 H(+). Functionally, histone methyltransferase that trimethylates 'Lys-20' of histone H4 to form H4K20me3. The sequence is that of Histone-lysine N-methyltransferase set9 (set9) from Aspergillus terreus (strain NIH 2624 / FGSC A1156).